A 208-amino-acid chain; its full sequence is Methylthioribulose-1-phosphate dehydratase (208 aa).

Zn(2+) is bound by residues histidine 98 and histidine 100.

It belongs to the aldolase class II family. MtnB subfamily. It depends on Zn(2+) as a cofactor.

The catalysed reaction is 5-(methylsulfanyl)-D-ribulose 1-phosphate = 5-methylsulfanyl-2,3-dioxopentyl phosphate + H2O. It participates in amino-acid biosynthesis; L-methionine biosynthesis via salvage pathway; L-methionine from S-methyl-5-thio-alpha-D-ribose 1-phosphate: step 2/6. Catalyzes the dehydration of methylthioribulose-1-phosphate (MTRu-1-P) into 2,3-diketo-5-methylthiopentyl-1-phosphate (DK-MTP-1-P). The protein is Methylthioribulose-1-phosphate dehydratase of Marinobacter nauticus (strain ATCC 700491 / DSM 11845 / VT8) (Marinobacter aquaeolei).